Here is a 176-residue protein sequence, read N- to C-terminus: MSIEEIPQGADVNVIPKNEKKARELIKKLNLKQIKGITRVTFKQRGNLIYAIDAPDVYRSAAGTYVVFGEAKVDDMNQRIADAQAAQAAETDAHAGHTHSHGEEDKSPEAITADLEKASLTEKIEEEEEEGEVDESGLDAKDIDIIVEQTQVSRAKAVKALRKHDGDMVNAIMELS.

The NAC-A/B domain maps to 16–80 (PKNEKKAREL…AKVDDMNQRI (65 aa)). A disordered region spans residues 83–110 (AQAAQAAETDAHAGHTHSHGEEDKSPEA). The span at 91 to 110 (TDAHAGHTHSHGEEDKSPEA) shows a compositional bias: basic and acidic residues. Residues 138–175 (LDAKDIDIIVEQTQVSRAKAVKALRKHDGDMVNAIMEL) form the UBA domain.

It belongs to the NAC-alpha family. In terms of assembly, part of the nascent polypeptide-associated complex (NAC), consisting of EGD2 and EGD1. NAC associates with ribosomes via EGD1.

Its subcellular location is the cytoplasm. The protein localises to the nucleus. Its function is as follows. Component of the nascent polypeptide-associated complex (NAC), a dynamic component of the ribosomal exit tunnel, protecting the emerging polypeptides from interaction with other cytoplasmic proteins to ensure appropriate nascent protein targeting. The NAC complex also promotes mitochondrial protein import by enhancing productive ribosome interactions with the outer mitochondrial membrane and blocks the inappropriate interaction of ribosomes translating non-secretory nascent polypeptides with translocation sites in the membrane of the endoplasmic reticulum. EGD2 may also be involved in transcription regulation. In Scheffersomyces stipitis (strain ATCC 58785 / CBS 6054 / NBRC 10063 / NRRL Y-11545) (Yeast), this protein is Nascent polypeptide-associated complex subunit alpha (EGD2).